The chain runs to 484 residues: tRNA-2-methylthio-N(6)-dimethylallyladenosine synthase (484 aa).

Positions 36–153 (GKLYIKTHGC…LPELIRARRE (118 aa)) constitute an MTTase N-terminal domain. The [4Fe-4S] cluster site is built by C45, C82, C116, C190, C194, and C197. A Radical SAM core domain is found at 176–415 (RAEGPSAFVS…HISAHAASIS (240 aa)). The TRAM domain maps to 416–479 (QSMVGSVQRV…SNSLRGRIQL (64 aa)). Residues 428-450 (EGPSRRDPNELTGKSENMRPVNF) form a disordered region.

The protein belongs to the methylthiotransferase family. MiaB subfamily. Monomer. [4Fe-4S] cluster serves as cofactor.

It is found in the cytoplasm. It carries out the reaction N(6)-dimethylallyladenosine(37) in tRNA + (sulfur carrier)-SH + AH2 + 2 S-adenosyl-L-methionine = 2-methylsulfanyl-N(6)-dimethylallyladenosine(37) in tRNA + (sulfur carrier)-H + 5'-deoxyadenosine + L-methionine + A + S-adenosyl-L-homocysteine + 2 H(+). In terms of biological role, catalyzes the methylthiolation of N6-(dimethylallyl)adenosine (i(6)A), leading to the formation of 2-methylthio-N6-(dimethylallyl)adenosine (ms(2)i(6)A) at position 37 in tRNAs that read codons beginning with uridine. The chain is tRNA-2-methylthio-N(6)-dimethylallyladenosine synthase from Xanthomonas oryzae pv. oryzae (strain MAFF 311018).